A 269-amino-acid chain; its full sequence is Photosystem I assembly factor PSA3, chloroplastic (269 aa).

A chloroplast-targeting transit peptide spans methionine 1–valine 37.

Its subcellular location is the plastid. The protein resides in the chloroplast thylakoid membrane. Functionally, nuclear genome-encoded factor required for the accumulation of photosystem I (PSI). Functions as a PSI biogenesis factor. Cooperates with PYG7 to promote the stable assembly of PSI in the thylakoid membrane. May target primarily the PsaC subunit. Does not seem to be required for the expression of chloroplast genes encoding PSI subunits. The chain is Photosystem I assembly factor PSA3, chloroplastic from Zea mays (Maize).